Reading from the N-terminus, the 200-residue chain is Small ribosomal subunit protein uS4 (200 aa).

Positions 22 to 41 (TGKELQKRPYAPGQHGPNQR) are disordered. Positions 92 to 152 (SRLDNLVYRM…EKSRNLQVIK (61 aa)) constitute an S4 RNA-binding domain.

This sequence belongs to the universal ribosomal protein uS4 family. In terms of assembly, part of the 30S ribosomal subunit. Contacts protein S5. The interaction surface between S4 and S5 is involved in control of translational fidelity.

In terms of biological role, one of the primary rRNA binding proteins, it binds directly to 16S rRNA where it nucleates assembly of the body of the 30S subunit. Its function is as follows. With S5 and S12 plays an important role in translational accuracy. In Halalkalibacterium halodurans (strain ATCC BAA-125 / DSM 18197 / FERM 7344 / JCM 9153 / C-125) (Bacillus halodurans), this protein is Small ribosomal subunit protein uS4.